Consider the following 598-residue polypeptide: Nuclear receptor subfamily 4 group A member 2 (598 aa).

Positions 1-22 (MPCVQAQYGSSPQGASPASQSY) are disordered. Residues 8–22 (YGSSPQGASPASQSY) are compositionally biased toward low complexity. A DNA-binding region (nuclear receptor) is located at residues 260 to 335 (EGLCAVCGDN…VGMVKEVVRT (76 aa)). 2 consecutive NR C4-type zinc fingers follow at residues 263–283 (CAVC…CEGC) and 299–323 (CLAN…FQKC). Positions 287 to 314 (FKRTVQKNAKYVCLANKNCPVDKRRRNR) match the Bipartite nuclear localization signal (NLS1) motif. The interval 337–361 (SLKGRRGRLPSKPKSPQDPSPPSPP) is disordered. The Nuclear localization signal (NLS1) motif lies at 338-350 (LKGRRGRLPSKPK). The span at 352–361 (PQDPSPPSPP) shows a compositional bias: pro residues. The NR LBD domain maps to 360–595 (PPVSLISALV…AIIDKLFLDT (236 aa)). A nuclear export sequence (NES1) motif is present at residues 443–452 (FLELFVLRLA). The nuclear export sequence (NES2) signature appears at 568 to 577 (QGLQRIFYLK).

This sequence belongs to the nuclear hormone receptor family. NR4 subfamily. In terms of assembly, interacts with SFPQ, NCOR2, SIN3A and HADC1. The interaction with NCOR2 increases in the absence of PITX3. Interacts with PER2. In terms of tissue distribution, brain.

The protein resides in the cytoplasm. Its subcellular location is the nucleus. Its function is as follows. Transcriptional regulator which is important for the differentiation and maintenance of meso-diencephalic dopaminergic (mdDA) neurons during development. It is crucial for expression of a set of genes such as SLC6A3, SLC18A2, TH and DRD2 which are essential for development of mdDA neurons. The protein is Nuclear receptor subfamily 4 group A member 2 (Nr4a2) of Mus musculus (Mouse).